The primary structure comprises 258 residues: MMNLRVLFLALLLLASPLLQVARCQSDAEDHSSLVDDVVGENTDDAVEEDDHDLDMNLSSFPGVETVCVFPKNSAKLVPAGEETELLVGLKNEGKTRVGVMGIRASVHLPYDHKLLVQNLTMLRLNNASIPTSLQATFPYIFAVSQYLQPGAFDLVGYIIYDVEGKPYQSVFYNGTIEVVESGGLLSGESVFLLTLGIGLLLLLGLWAYSQVQRLTKKTKKVSKVEVGTRSTEASLDEWLEGTTLAKTSSGKTKNKKN.

An N-terminal signal peptide occupies residues 1 to 24 (MMNLRVLFLALLLLASPLLQVARC). Residues 25 to 190 (QSDAEDHSSL…ESGGLLSGES (166 aa)) are Lumenal-facing. Residues Asn-57, Asn-119, and Asn-127 are each glycosylated (N-linked (GlcNAc...) asparagine). The chain crosses the membrane as a helical span at residues 191-209 (VFLLTLGIGLLLLLGLWAY). Topologically, residues 210–258 (SQVQRLTKKTKKVSKVEVGTRSTEASLDEWLEGTTLAKTSSGKTKNKKN) are cytoplasmic.

Belongs to the TRAP-alpha family. Heterotetramer of TRAP-alpha, TRAP-beta, TRAP-delta and TRAP-gamma. Phosphorylated in its cytoplasmic tail.

It is found in the endoplasmic reticulum membrane. Functionally, TRAP proteins are part of a complex whose function is to bind calcium to the ER membrane and thereby regulate the retention of ER resident proteins. May be involved in the recycling of the translocation apparatus after completion of the translocation process or may function as a membrane-bound chaperone facilitating folding of translocated proteins. The chain is Translocon-associated protein subunit alpha from Arabidopsis thaliana (Mouse-ear cress).